A 382-amino-acid polypeptide reads, in one-letter code: Mannitol-1-phosphate 5-dehydrogenase (382 aa).

Residue A3 to G14 participates in NAD(+) binding.

The protein belongs to the mannitol dehydrogenase family.

It carries out the reaction D-mannitol 1-phosphate + NAD(+) = beta-D-fructose 6-phosphate + NADH + H(+). This Pectobacterium atrosepticum (strain SCRI 1043 / ATCC BAA-672) (Erwinia carotovora subsp. atroseptica) protein is Mannitol-1-phosphate 5-dehydrogenase.